Here is a 504-residue protein sequence, read N- to C-terminus: Procardosin-A (504 aa).

Residues M1 to S24 form the signal peptide. A propeptide spanning residues V25–R68 is cleaved from the precursor. The 417-residue stretch at Y85–A501 folds into the Peptidase A1 domain. The active site involves D103. C116 and C122 form a disulfide bridge. Residue N139 is glycosylated (N-linked (GlcNAc...) asparagine). Positions R246 to D248 match the RGD motif motif. C277 and C281 are joined by a disulfide. The active site involves D286. Positions G310–S414 are cleaved as a propeptide — plant-specific insert. The Saposin B-type domain maps to V311–S416. 4 cysteine pairs are disulfide-bonded: C316-C410, C341-C382, C347-C379, and C424-C461. N432 is a glycosylation site (N-linked (GlcNAc...) asparagine). Positions K455–E457 match the KGE motif motif.

This sequence belongs to the peptidase A1 family. As to quaternary structure, heterodimer of a light chain and a heavy chain. An intermediate form (35 kDa and 30 kDa subunits) is produced first, and undergoes proteolytic processing to remove the internal plant-specific insert (PSI) and the propeptide. There is some heterogeniety at the cleavage site. Interacts (via RGD or KGE motifs) with PLD1 (via C2 domain). In terms of processing, N-glycosylated. Glycans found at Asn-139 include approximately 6% oligomannose, 82% oligosaccharides of the plant modified type with proximal fucose but without xylose and 6% oligosaccharides of the plant modified type with proximal fucose and xylose. Glycans found at Asn-432 include 14% oligosaccharides of the plant modified type with proximal fucose but without xylose and 86% oligosaccharides of the plant modified type with proximal fucose and xylose. As to expression, detected only in pistils, not in seeds, roots, midribs, bracts, stamens, pollen, vascular or supporting tissues. Detected in seeds. High amounts are detected in the broad outer region of the upper portion of the stigma, towards the lower portion of the stigma it accumulates at the periphery. Within the stigma, expressed mainly in the epidermic papillae, lower levels are found in the cortical parenchyma. Present mainly in epidermal cells within the stye (at protein level). Expressed in young flower buds, and at lower levels in seeds, pollen and bracteas, but not in roots or leaves.

The protein localises to the microsome membrane. The protein resides in the protein storage vacuole. It is found in the secreted. It localises to the cell wall. Its subcellular location is the extracellular space. The protein localises to the extracellular matrix. Inhibited by the specific aspartic proteinase inhibitors diazoacetyl-noleucine methyl ester and pepstatin. Aspartic proteinase with a high preference for bonds between hydrophobic residues. Cleaves alpha-lactalbumin but not beta-lactoglobulin. The sequence is that of Procardosin-A from Cynara cardunculus (Cardoon).